The primary structure comprises 333 residues: Ornithine carbamoyltransferase (333 aa).

Residues 56–59, glutamine 83, arginine 107, and 134–137 contribute to the carbamoyl phosphate site; these read STRT and HPTQ. L-ornithine contacts are provided by residues asparagine 167, aspartate 231, and 235 to 236; that span reads SM. Residues 273-274 and arginine 318 each bind carbamoyl phosphate; that span reads CL.

It belongs to the aspartate/ornithine carbamoyltransferase superfamily. OTCase family.

The protein resides in the cytoplasm. The enzyme catalyses carbamoyl phosphate + L-ornithine = L-citrulline + phosphate + H(+). The protein operates within amino-acid biosynthesis; L-arginine biosynthesis; L-arginine from L-ornithine and carbamoyl phosphate: step 1/3. In terms of biological role, reversibly catalyzes the transfer of the carbamoyl group from carbamoyl phosphate (CP) to the N(epsilon) atom of ornithine (ORN) to produce L-citrulline. In Staphylococcus aureus (strain Mu50 / ATCC 700699), this protein is Ornithine carbamoyltransferase (argF).